Here is a 763-residue protein sequence, read N- to C-terminus: Phosphoglycerol transferase I (763 aa).

The next 4 helical transmembrane spans lie at 4–19, 26–48, 76–98, and 105–127; these read LLSF…IYAW, WWFA…LFAS, YILP…GWIL, and PHHF…ASPA.

This sequence belongs to the OpgB family.

The protein resides in the cell inner membrane. The catalysed reaction is a phosphatidylglycerol + a membrane-derived-oligosaccharide D-glucose = a 1,2-diacyl-sn-glycerol + a membrane-derived-oligosaccharide 6-(glycerophospho)-D-glucose.. Its pathway is glycan metabolism; osmoregulated periplasmic glucan (OPG) biosynthesis. In terms of biological role, transfers a phosphoglycerol residue from phosphatidylglycerol to the membrane-bound nascent glucan backbones. This is Phosphoglycerol transferase I from Escherichia coli O6:H1 (strain CFT073 / ATCC 700928 / UPEC).